We begin with the raw amino-acid sequence, 1684 residues long: A-kinase anchor protein 12 (1684 aa).

Positions 1–124 (MGAGSSTEQR…DITKDEQEET (124 aa)) are disordered. G2 carries the N-myristoyl glycine lipid modification. S11, S18, S22, and S27 each carry phosphoserine. The segment covering 30–48 (GPAAEASGAAGDPADADPA) has biased composition (low complexity). The span at 75 to 86 (ESQDGQEEEVTV) shows a compositional bias: acidic residues. The span at 89–105 (VGQRESEDVKEKDRAKE) shows a compositional bias: basic and acidic residues. S136 is subject to Phosphoserine. Disordered regions lie at residues 175 to 281 (SDTV…ETTS) and 296 to 353 (KKTS…SADY). The segment covering 212 to 227 (ASKESELKQSTEKQEG) has biased composition (basic and acidic residues). Positions 228 to 247 (TLKQAQSSTEIPLQAESGQG) are enriched in polar residues. Residues S234 and S244 each carry the phosphoserine modification. Over residues 251 to 266 (EAAKDGEENREKEPTK) the composition is skewed to basic and acidic residues. Residues 253 to 543 (AKDGEENREK…QHIQTESPES (291 aa)) are involved in PKC-binding. S270 and S273 each carry phosphoserine. Positions 270–281 (SPTSPVSNETTS) are enriched in polar residues. The span at 302 to 320 (KPKEDDLETSEKRKEQEAE) shows a compositional bias: basic and acidic residues. Residues 321–342 (KVDEEEGEKTEPAPAEEQEPAE) are compositionally biased toward acidic residues. Position 330 is a phosphothreonine (T330). The residue at position 350 (S350) is a Phosphoserine. Y353 bears the Phosphotyrosine mark. Phosphoserine occurs at positions 371 and 467. The segment at 421-479 (GSGESLPPEKLAETQEVPQEAEPVEELMKTKEVCVSGGDHTQLTDLSPEEKMLPKHPEG) is disordered. Residues 468 to 478 (PEEKMLPKHPE) show a composition bias toward basic and acidic residues. A phosphoserine mark is found at S489, S505, and S507. The tract at residues 492 to 825 (RIKVQGSPLK…INEDDPDVPA (334 aa)) is disordered. The span at 497–511 (GSPLKKLFSSSGLKK) shows a compositional bias: low complexity. Residues 512-521 (LSGKKQKGKR) are compositionally biased toward basic residues. S540, S543, S584, S598, S613, and S615 each carry phosphoserine. The AKAP CaM-binding 1 motif lies at 593–613 (ITPWASFKKMVTPKKRVRRPS). The span at 611–625 (RPSESDKEEELDKVK) shows a compositional bias: basic and acidic residues. Over residues 626-637 (SATLSSTESTAS) the composition is skewed to low complexity. Phosphothreonine is present on T628. 4 positions are modified to phosphoserine: S630, S631, S634, and S637. Positions 641 to 660 (DEVRAVGEEQRSEEPKRRVD) are enriched in basic and acidic residues. Residues S682, S683, and S684 each carry the phosphoserine modification. The span at 696-710 (DGHRAEEASKDKEAD) shows a compositional bias: basic and acidic residues. Over residues 714–723 (ASTQEQDQAH) the composition is skewed to polar residues. Positions 724–741 (GSSSPEPAGSPSEGEGVS) are enriched in low complexity. Phosphoserine occurs at positions 733, 745, 767, and 786. Positions 740-760 (VSTWESFKRLVTPRKKSKSKL) match the AKAP CaM-binding 2 motif. Residues 781–801 (EESWVSIKKFIPGRRKKRADG) carry the AKAP CaM-binding 3 motif. Position 871 is a phosphothreonine (T871). S873 is subject to Phosphoserine. The interval 970-1001 (TEASGAEETTDMVSAVSQLSDSPDTTEEATPV) is disordered. Positions 980 to 992 (DMVSAVSQLSDSP) are enriched in polar residues. A Glycyl lysine isopeptide (Lys-Gly) (interchain with G-Cter in SUMO1) cross-link involves residue K1030. Disordered regions lie at residues 1055 to 1106 (VEED…VTED), 1121 to 1211 (LMEQ…DVLE), 1232 to 1365 (EGEA…DKAD), and 1391 to 1492 (TVAT…REKI). A Phosphoserine modification is found at S1059. A compositionally biased stretch (polar residues) spans 1130–1176 (SSETLTDSETNGSTPLADSDTPNGTQQDETVDSQDSNAIAAVKQSQV). Composition is skewed to basic and acidic residues over residues 1198 to 1210 (QEEHREKPGRDVL) and 1239 to 1254 (DGEKVKDGQCVKELEV). S1292 is modified (phosphoserine). A compositionally biased stretch (basic and acidic residues) spans 1293 to 1331 (PEKREMGTDVEKEETETKTEQASEEHEQETAAPEHEGTH). Phosphoserine occurs at positions 1351, 1355, and 1357. Positions 1467–1492 (QRSDEDNKPDAGPDAAGKESAAREKI) are enriched in basic and acidic residues. The interval 1501-1514 (ELESKSNKIVQSVI) is RII-binding. Residues S1546 and S1645 each carry the phosphoserine modification. The tract at residues 1568–1684 (TLSAVAQEGL…QEPKGDLTES (117 aa)) is disordered. Over residues 1653–1684 (LTEEGDALKEEMNKAQTEEDDLQEPKGDLTES) the composition is skewed to basic and acidic residues.

Binds to dimeric RII-alpha regulatory subunit of PKC. In terms of tissue distribution, isoform 1 is predominantly found in the nervous system. Isoform 3 is testis specific.

It localises to the cytoplasm. The protein localises to the cytoskeleton. Its subcellular location is the membrane. In terms of biological role, anchoring protein that mediates the subcellular compartmentation of protein kinase A (PKA) and protein kinase C (PKC). The chain is A-kinase anchor protein 12 (Akap12) from Mus musculus (Mouse).